The following is a 717-amino-acid chain: MEEFDKSISFDGRDIRLKIGLLAPQAGGSVLIQSGETAVLVTATTAKAREGVDFLPLTVDYEERLYAAGRIPGGFLRREGRPPEKAILTGRLIDRPLRPLFPNWMRDDIQVVATTLSMDEEVPPDVLAVTGASVAVLLAGIPFQGPMAAVRVGLLGDEFIINPTYKEIHNGELDLVVAGSPEGVVMIEAGANQLPERDIIEAIDFGYEAVRDLITAQRELIDQLGIPLVTREAPAVNETVQNFLREQAKEEIKQILSQFTLSKTERDEKLEAIENRIKETITALPDEDTLKAPTLEEPKLIGNLFKDLTKKLMRAQIIEDGVRVDGRQLDEVRPISCRVGVLPRRVHGSGLFNRGLTQVLSIATLGTPGDAQDLGDDLHPEDEKRYLHHYNFPPFSVGETRPMRSPGRREIGHGALAERAIVPVLPPQEEFPYVLRVVSEVLSSNGSTSMGSVCGSTLALMDAGVPLKKPVSGAAMGLIKEGEEVRILTDIQGIEDFLGDMDFKVAGTDSGITALQMDMKIPGLSMEVVAKAIEQALPARKHILEKMLATLEKPRTELSPHAPRLLTIKIDPDLIGLVIGPGGKTVKGITEQTGTKIDIDDDGTVTISSTDGEQAEKAKRLIYNMTRKLNEGEVYLGRVTRIIQIGAFVEVLPGKEGMIHISQLAEGRVGKVEDEVAVGDEVLVKVREIDSKGRLNLTRLGIHPDEAAAARKAATVV.

Residues aspartate 496 and aspartate 502 each coordinate Mg(2+). Residues 563–622 (PRLLTIKIDPDLIGLVIGPGGKTVKGITEQTGTKIDIDDDGTVTISSTDGEQAEKAKRLI) form the KH domain. The 69-residue stretch at 632-700 (GEVYLGRVTR…SKGRLNLTRL (69 aa)) folds into the S1 motif domain.

Belongs to the polyribonucleotide nucleotidyltransferase family. The cofactor is Mg(2+).

It is found in the cytoplasm. It catalyses the reaction RNA(n+1) + phosphate = RNA(n) + a ribonucleoside 5'-diphosphate. In terms of biological role, involved in mRNA degradation. Catalyzes the phosphorolysis of single-stranded polyribonucleotides processively in the 3'- to 5'-direction. This is Polyribonucleotide nucleotidyltransferase from Microcystis aeruginosa (strain NIES-843 / IAM M-2473).